The following is a 653-amino-acid chain: Epithelial sodium channel subunit gamma (653 aa).

Topologically, residues M1–L55 are cytoplasmic. Residues W56–F76 form a helical membrane-spanning segment. Over S77–Q538 the chain is Extracellular. Intrachain disulfides connect C100-C287, C211-C218, C264-C271, C376-C461, C398-C457, C402-C453, C411-C438, and C413-C427. Residues R137–S225 are gating release of inhibition by proteolysis (GRIP); protease-sensitive region that is responsible for the proteolytic activation of the channel. N-linked (GlcNAc...) asparagine glycosylation occurs at N213. N-linked (GlcNAc...) asparagine glycosylation occurs at N275. N-linked (GlcNAc...) asparagine glycosylation occurs at N501. Residues L539–I559 traverse the membrane as a helical segment. Over D560–P653 the chain is Cytoplasmic. A disordered region spans residues A582–N632. The short motif at P627 to Y631 is the PY motif; recruits WW domain-containing proteins and is thereby required for ubiquitination and inhibition of the channel by NEDD4 and NEDD4L element.

Belongs to the amiloride-sensitive sodium channel (TC 1.A.6) family. SCNN1G subfamily. As to quaternary structure, component of the heterotrimeric epithelial sodium channel (ENaC) composed of an alpha/SCNN1A, a beta/SCNN1B and a gamma/SCNN1G subunit. Interacts with WWP1 (via WW domains). Interacts with WWP2 (via WW domains); inhibits the channel. Interacts with the full-length immature form of PCSK9 (pro-PCSK9); inhibits ENaC by promoting its proteasomal degradation. Interacts with BPIFA1; the interaction is indirect via SCNN1B and inhibits the proteolytic maturation of SCNN1A and SCNN1G and the activation of ENaC. Phosphorylated on serine and threonine residues. Aldosterone and insulin increase the basal level of phosphorylation. Post-translationally, ubiquitinated. Can be ubiquitinated at multiple sites and undergo monoubiquitination and polyubiquitination. Ubiquitination by NEDD4 or NEDD4L inhibits the ENaC channel through endocytosis, intracellular retention and degradation of its individual subunits. In terms of processing, ENaC is activated through the proteolytic maturation of its subunits. Furin cleaves the SCNN1G subunit first, followed by cleavage by prostasin (PRSS8), which results in a stepwise increase in the open probability of the channel due to the release of an inhibitory tract. BPIFA1, which is recruited by the SCNN1B subunit, prevents the proteolytic activation of ENaC. N-glycosylated. N-linked glycans are processed to complex type during ENaC complex assembly and transport to the plasma membrane.

The protein localises to the apical cell membrane. It carries out the reaction Na(+)(in) = Na(+)(out). With respect to regulation, originally identified and characterized by its inhibition by the diuretic drug amiloride. This is one of the three pore-forming subunits of the heterotrimeric epithelial sodium channel (ENaC), a critical regulator of sodium balance and fluid homeostasis. ENaC operates in epithelial tissues, where it mediates the electrodiffusion of sodium ions from extracellular fluid through the apical membrane of cells, with water following osmotically. It plays a key role in maintaining sodium homeostasis through electrogenic sodium reabsorption in the kidneys. Additionally, ENaC is essential for airway surface liquid homeostasis, which is crucial for proper mucus clearance. In Oryctolagus cuniculus (Rabbit), this protein is Epithelial sodium channel subunit gamma.